The following is a 370-amino-acid chain: Platelet-derived growth factor D (370 aa).

The N-terminal stretch at 1–18 (MHRLIFVCTLVCANFCSC) is a signal peptide. Residues 52–170 (RDETIQVRGN…PGFKIYYSLL (119 aa)) form the CUB domain. The cysteines at positions 109 and 131 are disulfide-linked. N-linked (GlcNAc...) asparagine glycosylation is present at asparagine 276. 2 disulfide bridges follow: cysteine 302-cysteine 360 and cysteine 306-cysteine 362.

It belongs to the PDGF/VEGF growth factor family. As to quaternary structure, homodimer; disulfide-linked. Interacts with PDGFRB homodimers, and with heterodimers formed by PDGFRA and PDGFRB. Post-translationally, activated by proteolytic cleavage. Proteolytic removal of the N-terminal CUB domain releasing the core domain is necessary for unmasking the receptor-binding epitopes of the core domain. Cleavage after Arg-247 or Arg-249 by urokinase plasminogen activator gives rise to the active form.

It localises to the secreted. Growth factor that plays an essential role in the regulation of embryonic development, cell proliferation, cell migration, survival and chemotaxis. Potent mitogen for cells of mesenchymal origin. Plays an important role in wound healing. Induces macrophage recruitment, increased interstitial pressure, and blood vessel maturation during angiogenesis. Can initiate events that lead to a mesangial proliferative glomerulonephritis, including influx of monocytes and macrophages and production of extracellular matrix. This is Platelet-derived growth factor D (PDGFD) from Pongo abelii (Sumatran orangutan).